A 118-amino-acid polypeptide reads, in one-letter code: Putative pterin-4-alpha-carbinolamine dehydratase (118 aa).

It belongs to the pterin-4-alpha-carbinolamine dehydratase family.

The enzyme catalyses (4aS,6R)-4a-hydroxy-L-erythro-5,6,7,8-tetrahydrobiopterin = (6R)-L-erythro-6,7-dihydrobiopterin + H2O. In Pseudomonas aeruginosa (strain LESB58), this protein is Putative pterin-4-alpha-carbinolamine dehydratase.